A 411-amino-acid polypeptide reads, in one-letter code: Gamma-glutamyl phosphate reductase (411 aa).

Belongs to the gamma-glutamyl phosphate reductase family.

The protein localises to the cytoplasm. The catalysed reaction is L-glutamate 5-semialdehyde + phosphate + NADP(+) = L-glutamyl 5-phosphate + NADPH + H(+). It functions in the pathway amino-acid biosynthesis; L-proline biosynthesis; L-glutamate 5-semialdehyde from L-glutamate: step 2/2. Catalyzes the NADPH-dependent reduction of L-glutamate 5-phosphate into L-glutamate 5-semialdehyde and phosphate. The product spontaneously undergoes cyclization to form 1-pyrroline-5-carboxylate. The chain is Gamma-glutamyl phosphate reductase from Wolinella succinogenes (strain ATCC 29543 / DSM 1740 / CCUG 13145 / JCM 31913 / LMG 7466 / NCTC 11488 / FDC 602W) (Vibrio succinogenes).